The following is a 223-amino-acid chain: uncharacterized protein (223 aa).

The first 17 residues, 1-17 (MLGQGLIFISLAFVAHA), serve as a signal peptide directing secretion. Asn58 carries an N-linked (GlcNAc...) asparagine glycan. The interval 149-188 (VRKKGSRPSKPQKEKQGNKQGSKTEESPNVDEDELESEPE) is disordered. The span at 159 to 174 (PQKEKQGNKQGSKTEE) shows a compositional bias: basic and acidic residues. The span at 176–187 (PNVDEDELESEP) shows a compositional bias: acidic residues. Residues 191–211 (TFFQKYGLYLIPILFLIIMSG) form a helical membrane-spanning segment.

It localises to the endoplasmic reticulum membrane. This is an uncharacterized protein from Schizosaccharomyces pombe (strain 972 / ATCC 24843) (Fission yeast).